A 351-amino-acid polypeptide reads, in one-letter code: Transcriptional activator POG1 (351 aa).

Basic and acidic residues predominate over residues 1 to 26; it reads MKQEPHRQSEEKEKPKGPMAVEREQH. The interval 1–56 is disordered; it reads MKQEPHRQSEEKEKPKGPMAVEREQHTSLSSGTTVTASTGDESTNSRPVESSQTEK. Residues 27–56 are compositionally biased toward polar residues; that stretch reads TSLSSGTTVTASTGDESTNSRPVESSQTEK. A phosphoserine mark is found at Ser152 and Ser168. Disordered stretches follow at residues 234–256 and 291–351; these read PGMG…TPVM and QHQL…PPPT. Over residues 241–256 the composition is skewed to polar residues; sequence QLPTMSSNSESQTPVM. Position 314 is a phosphoserine (Ser314).

This sequence belongs to the POG1 family. Phosphorylated by CDC28.

Its subcellular location is the nucleus. Functionally, transcriptional activator which promotes cell cycle recovery with CLN2, after pheromone induced G1 arrest, probably inhibiting the ability of STE20 to activate the pheromone response pathway. Binds the promoters of genes that function in cell cycle regulation, cytoskeletal organization, and spindle assembly. May also be involved in stress-resistance. The sequence is that of Transcriptional activator POG1 (POG1) from Saccharomyces cerevisiae (strain ATCC 204508 / S288c) (Baker's yeast).